The primary structure comprises 68 residues: Protein SlyX homolog (68 aa).

It belongs to the SlyX family.

The sequence is that of Protein SlyX homolog from Brucella melitensis biotype 1 (strain ATCC 23456 / CCUG 17765 / NCTC 10094 / 16M).